The sequence spans 973 residues: UvrABC system protein A (973 aa).

34-41 (GLSGSGKS) lines the ATP pocket. 2 consecutive ABC transporter domains span residues 331–609 (WAKS…PKSL) and 629–958 (PKKK…QFLK). Residue 662 to 669 (GVSGGGKS) coordinates ATP. The C4-type zinc finger occupies 761–787 (CEACQGDGVIKIEMHFLPDVYVTCDVC).

The protein belongs to the ABC transporter superfamily. UvrA family. In terms of assembly, forms a heterotetramer with UvrB during the search for lesions.

It is found in the cytoplasm. In terms of biological role, the UvrABC repair system catalyzes the recognition and processing of DNA lesions. UvrA is an ATPase and a DNA-binding protein. A damage recognition complex composed of 2 UvrA and 2 UvrB subunits scans DNA for abnormalities. When the presence of a lesion has been verified by UvrB, the UvrA molecules dissociate. The polypeptide is UvrABC system protein A (Rhizobium meliloti (strain 1021) (Ensifer meliloti)).